The following is a 749-amino-acid chain: Amyloid-beta A4 precursor protein-binding family A member 2 (749 aa).

2 disordered regions span residues Met-1–Glu-94 and Asp-130–Pro-343. A Phosphoserine modification is found at Ser-11. Residues Gly-70–Thr-80 show a composition bias toward polar residues. Composition is skewed to acidic residues over residues Ser-81–Glu-94 and Thr-131–Thr-142. The interval His-185–Ala-270 is STXBP1-binding. Ser-208 carries the post-translational modification Phosphoserine. The span at Asp-218 to Asp-227 shows a compositional bias: acidic residues. Polar residues predominate over residues Leu-237–Glu-247. The segment covering Arg-305 to His-315 has biased composition (basic and acidic residues). Residues Leu-366–Asp-555 form the PID domain. PDZ domains follow at residues Glu-568–Ser-653 and Thr-659–Ala-735.

Part of a multimeric complex containing STXBP1 and syntaxin-1. Binds to the cytoplasmic domain of amyloid-beta protein, and to the nuclear factor NF-kappa-B/p65 via its PDZ domain. Interacts with the N-terminal domain of NECAB3.

Functionally, putative function in synaptic vesicle exocytosis by binding to STXBP1, an essential component of the synaptic vesicle exocytotic machinery. May modulate processing of the amyloid-beta precursor protein (APP) and hence formation of APP-beta. In Pongo abelii (Sumatran orangutan), this protein is Amyloid-beta A4 precursor protein-binding family A member 2 (APBA2).